Consider the following 131-residue polypeptide: D-ribose pyranase (131 aa).

Residue H20 is the Proton donor of the active site. Residues D28, H98, and 120–122 (YAN) contribute to the substrate site.

Belongs to the RbsD / FucU family. RbsD subfamily. As to quaternary structure, homodecamer.

The protein localises to the cytoplasm. The catalysed reaction is beta-D-ribopyranose = beta-D-ribofuranose. It participates in carbohydrate metabolism; D-ribose degradation; D-ribose 5-phosphate from beta-D-ribopyranose: step 1/2. In terms of biological role, catalyzes the interconversion of beta-pyran and beta-furan forms of D-ribose. This chain is D-ribose pyranase, found in Bacillus cereus (strain ATCC 14579 / DSM 31 / CCUG 7414 / JCM 2152 / NBRC 15305 / NCIMB 9373 / NCTC 2599 / NRRL B-3711).